The primary structure comprises 272 residues: D-aminoacyl-tRNA deacylase (272 aa).

In terms of assembly, monomer. Zn(2+) serves as cofactor.

The enzyme catalyses a D-aminoacyl-tRNA + H2O = a tRNA + a D-alpha-amino acid + H(+). The catalysed reaction is glycyl-tRNA(Ala) + H2O = tRNA(Ala) + glycine + H(+). It carries out the reaction D-tyrosyl-tRNA(Tyr) + H2O = D-tyrosine + tRNA(Tyr). Its function is as follows. D-aminoacyl-tRNA deacylase with broad substrate specificity. By recycling D-aminoacyl-tRNA to D-amino acids and free tRNA molecules, this enzyme counteracts the toxicity associated with the formation of D-aminoacyl-tRNA entities in vivo. Catalyzes the hydrolysis of D-tyrosyl-tRNA(Tyr) and D-aspartyl-tRNA(Asp). This chain is D-aminoacyl-tRNA deacylase, found in Pyrococcus abyssi (strain GE5 / Orsay).